Here is a 547-residue protein sequence, read N- to C-terminus: Chaperonin GroEL 1 (547 aa).

Residues 30–33, Lys-51, 87–91, Gly-415, 479–481, and Asp-495 each bind ATP; these read TLGP, DGTTT, and NAA. A disordered region spans residues 525 to 547; it reads PKKKGAPAGGGMGGMGGMDEMDY. Residues 531–541 show a composition bias toward gly residues; sequence PAGGGMGGMGG.

It belongs to the chaperonin (HSP60) family. As to quaternary structure, forms a cylinder of 14 subunits composed of two heptameric rings stacked back-to-back. Interacts with the co-chaperonin GroES.

It is found in the cytoplasm. It catalyses the reaction ATP + H2O + a folded polypeptide = ADP + phosphate + an unfolded polypeptide.. Functionally, together with its co-chaperonin GroES, plays an essential role in assisting protein folding. The GroEL-GroES system forms a nano-cage that allows encapsulation of the non-native substrate proteins and provides a physical environment optimized to promote and accelerate protein folding. The polypeptide is Chaperonin GroEL 1 (Anaeromyxobacter sp. (strain Fw109-5)).